Reading from the N-terminus, the 371-residue chain is 4-hydroxy-3-methylbut-2-en-1-yl diphosphate synthase (flavodoxin) (371 aa).

Residues Cys270, Cys273, Cys305, and Glu312 each contribute to the [4Fe-4S] cluster site.

The protein belongs to the IspG family. The cofactor is [4Fe-4S] cluster.

It catalyses the reaction (2E)-4-hydroxy-3-methylbut-2-enyl diphosphate + oxidized [flavodoxin] + H2O + 2 H(+) = 2-C-methyl-D-erythritol 2,4-cyclic diphosphate + reduced [flavodoxin]. It participates in isoprenoid biosynthesis; isopentenyl diphosphate biosynthesis via DXP pathway; isopentenyl diphosphate from 1-deoxy-D-xylulose 5-phosphate: step 5/6. Its function is as follows. Converts 2C-methyl-D-erythritol 2,4-cyclodiphosphate (ME-2,4cPP) into 1-hydroxy-2-methyl-2-(E)-butenyl 4-diphosphate. In Shewanella woodyi (strain ATCC 51908 / MS32), this protein is 4-hydroxy-3-methylbut-2-en-1-yl diphosphate synthase (flavodoxin).